The chain runs to 366 residues: MTKLRVGLLFGGCSGEHEVSIRSAKVIATALTKVQNKEKYELIPIYIQKNGLWQPSDFSQKVLNSDHPSLLQLTNENNHDLNTSLTQQSSSPLWQIPPQAAQVDVWFPILHGPNGEDGTIQGLLKLMQVPFVGSGVLGSAMGMDKIAMKIAFDHAGLPQVKYQVVTRSQIWSNSCVFPKLCDDIETTLEYPCFVKPANLGSSVGIAKVRSRSELETALDNAASYDRRIIVEAGVEAKELECAVLGNDMPKASIVGEITYNSDFYDYETKYTEGKADLHIPARVSEAIATKIKEMATQAFLAVDAAGLARVDFFYVEKTGEILINEINTMPGFTSSSMYPMLWEASGIPFSELVDTLIQLALERHSK.

Residues Lys149 to Gln358 enclose the ATP-grasp domain. ATP is bound at residue Glu185–Glu240. Mg(2+) is bound by residues Asp311, Glu325, and Asn327.

Belongs to the D-alanine--D-alanine ligase family. Mg(2+) serves as cofactor. Requires Mn(2+) as cofactor.

Its subcellular location is the cytoplasm. The enzyme catalyses 2 D-alanine + ATP = D-alanyl-D-alanine + ADP + phosphate + H(+). The protein operates within cell wall biogenesis; peptidoglycan biosynthesis. In terms of biological role, cell wall formation. This Trichodesmium erythraeum (strain IMS101) protein is D-alanine--D-alanine ligase.